A 466-amino-acid chain; its full sequence is Cysteine--tRNA ligase (466 aa).

Residue Cys-29 coordinates Zn(2+). Residues 31–41 carry the 'HIGH' region motif; sequence PTVYNYIHIGN. Zn(2+) contacts are provided by Cys-209, His-234, and Glu-238. Positions 266–270 match the 'KMSKS' region motif; it reads KMSKS. Lys-269 contacts ATP. Ser-270 carries the phosphoserine modification.

It belongs to the class-I aminoacyl-tRNA synthetase family. In terms of assembly, monomer. Zn(2+) serves as cofactor.

Its subcellular location is the cytoplasm. It catalyses the reaction tRNA(Cys) + L-cysteine + ATP = L-cysteinyl-tRNA(Cys) + AMP + diphosphate. This Bacillus pumilus (strain SAFR-032) protein is Cysteine--tRNA ligase.